Reading from the N-terminus, the 489-residue chain is Cysteine--tRNA ligase (489 aa).

Residue C27 participates in Zn(2+) binding. The short motif at 29–39 (VTVYDLCHLGH) is the 'HIGH' region element. The Zn(2+) site is built by C211, H236, and E240. The 'KMSKS' region motif lies at 268–272 (KMSKS). Position 271 (K271) interacts with ATP.

The protein belongs to the class-I aminoacyl-tRNA synthetase family. As to quaternary structure, monomer. Zn(2+) is required as a cofactor.

The protein localises to the cytoplasm. It catalyses the reaction tRNA(Cys) + L-cysteine + ATP = L-cysteinyl-tRNA(Cys) + AMP + diphosphate. The chain is Cysteine--tRNA ligase from Prochlorococcus marinus (strain AS9601).